The primary structure comprises 235 residues: MHLLVATAVSVERDAVARAFPAPGTEVSRPGITLHRLPDGWDLLAAGVGPARAAASTAAALTAAALDGRPYDLVVSAGIGGGFAPEAPVGSLVVADAITAADLGAETADGFLPVTDLGFGTVTHLPPAPLVRAAAEATGARPGTVLTGSTVTGTAARAALLRERHPGALAEAMEGFGVAEAAAAHGVPVLELRAVSNPVGPRDRAAWRIGEALAALTDAVGKLAPVLESWKPHER.

The protein belongs to the PNP/UDP phosphorylase family. Futalosine hydrolase subfamily.

The enzyme catalyses futalosine + H2O = dehypoxanthine futalosine + hypoxanthine. Its pathway is quinol/quinone metabolism; menaquinone biosynthesis. In terms of biological role, catalyzes the hydrolysis of futalosine (FL) to dehypoxanthine futalosine (DHFL) and hypoxanthine, a step in the biosynthesis of menaquinone (MK, vitamin K2). Does not accept aminodeoxyfutalosine (AFL) as a substrate. This Streptomyces coelicolor (strain ATCC BAA-471 / A3(2) / M145) protein is Futalosine hydrolase.